Consider the following 260-residue polypeptide: HMP-PP phosphatase (260 aa).

Asp-8 (nucleophile) is an active-site residue. Mg(2+)-binding residues include Asp-8, Asp-10, and Asp-212.

The protein belongs to the HAD-like hydrolase superfamily. Cof family. Mg(2+) is required as a cofactor.

The enzyme catalyses 4-amino-2-methyl-5-(diphosphooxymethyl)pyrimidine + H2O = 4-amino-2-methyl-5-(phosphooxymethyl)pyrimidine + phosphate + H(+). Functionally, catalyzes the hydrolysis of 4-amino-2-methyl-5-hydroxymethylpyrimidine pyrophosphate (HMP-PP) to 4-amino-2-methyl-5-hydroxymethylpyrimidine phosphate (HMP-P). This Shigella boydii serotype 4 (strain Sb227) protein is HMP-PP phosphatase.